A 360-amino-acid chain; its full sequence is MKLSQILTFASLLSGALAAPGKPHGKPGFASTSGLQFSIDGQTGYFAGSNSYWIGFLTNKADVDIGFNDVNTVPGEGTVYYQLHANGKSTINTGANGLQRMDYVVKSAEKHGIKLIINFVNNWDDYGGMNAYVKGYGAADHNDFYSNAKIQKAYRQYIRAVVSRYTKSDAVFAWELANEPRCKGCDTDVLYDWIKSTSEYIKSLDAKHMVCIGDEGFGLETLSDGSYPFTYVEGSDFARNLAIPTIDFGTFHLYPDSWGTSHEWGNLWTQAHGAACQAAGKPCLFEEYGVTSDHCALETPWQKTSLNTTGVSADLYWQYGDTLSSGPSPNDGHTVYYGTDDFKCMVTDHVAAIKAKQGWV.

An N-terminal signal peptide occupies residues 1–18 (MKLSQILTFASLLSGALA). The substrate site is built by Asn142 and Asn178. The Proton donor role is filled by Glu179. Tyr254 contacts substrate. The Nucleophile role is filled by Glu287. Asn307 carries N-linked (GlcNAc...) asparagine glycosylation. Trp317 is a binding site for substrate.

Belongs to the glycosyl hydrolase 5 (cellulase A) family.

The protein localises to the secreted. The catalysed reaction is Random hydrolysis of (1-&gt;4)-beta-D-mannosidic linkages in mannans, galactomannans and glucomannans.. Its function is as follows. Endo-1,4-mannanase, a crucial enzyme for depolymerization of seed galactomannans and wood galactoglucomannans. This chain is Probable mannan endo-1,4-beta-mannosidase A (manA), found in Aspergillus clavatus (strain ATCC 1007 / CBS 513.65 / DSM 816 / NCTC 3887 / NRRL 1 / QM 1276 / 107).